We begin with the raw amino-acid sequence, 301 residues long: Transcriptional activator protein NhaR (301 aa).

An HTH lysR-type domain is found at 6-63 (INYNHLYYFWHVYKEGSVVGAAEALYLTPQTITGQIRALEERLQGKLFKRKGRGLEPS). The segment at residues 23-42 (VVGAAEALYLTPQTITGQIR) is a DNA-binding region (H-T-H motif).

Belongs to the LysR transcriptional regulatory family.

The protein resides in the cytoplasm. Functionally, plays a role in the positive regulation of NhaA. The polypeptide is Transcriptional activator protein NhaR (nhaR) (Escherichia coli (strain K12)).